A 550-amino-acid chain; its full sequence is Glucose-6-phosphate isomerase (550 aa).

Residue glutamate 356 is the Proton donor of the active site. Active-site residues include histidine 387 and lysine 515.

Belongs to the GPI family.

It localises to the cytoplasm. It carries out the reaction alpha-D-glucose 6-phosphate = beta-D-fructose 6-phosphate. Its pathway is carbohydrate biosynthesis; gluconeogenesis. It participates in carbohydrate degradation; glycolysis; D-glyceraldehyde 3-phosphate and glycerone phosphate from D-glucose: step 2/4. Functionally, catalyzes the reversible isomerization of glucose-6-phosphate to fructose-6-phosphate. This chain is Glucose-6-phosphate isomerase, found in Photobacterium profundum (strain SS9).